Consider the following 46-residue polypeptide: Large ribosomal subunit protein bL34 (46 aa).

The protein belongs to the bacterial ribosomal protein bL34 family.

This chain is Large ribosomal subunit protein bL34 (rpmH), found in Mycobacterium avium.